Reading from the N-terminus, the 219-residue chain is Deoxyribose-phosphate aldolase 1 (219 aa).

Catalysis depends on aspartate 87, which acts as the Proton donor/acceptor. Lysine 149 (schiff-base intermediate with acetaldehyde) is an active-site residue. The active-site Proton donor/acceptor is the lysine 178.

Belongs to the DeoC/FbaB aldolase family. DeoC type 1 subfamily.

Its subcellular location is the cytoplasm. It catalyses the reaction 2-deoxy-D-ribose 5-phosphate = D-glyceraldehyde 3-phosphate + acetaldehyde. Its pathway is carbohydrate degradation; 2-deoxy-D-ribose 1-phosphate degradation; D-glyceraldehyde 3-phosphate and acetaldehyde from 2-deoxy-alpha-D-ribose 1-phosphate: step 2/2. Its function is as follows. Catalyzes a reversible aldol reaction between acetaldehyde and D-glyceraldehyde 3-phosphate to generate 2-deoxy-D-ribose 5-phosphate. This chain is Deoxyribose-phosphate aldolase 1, found in Vibrio vulnificus (strain YJ016).